The chain runs to 129 residues: D-ribose pyranase (129 aa).

His-20 serves as the catalytic Proton donor. Substrate-binding positions include Asp-28, His-96, and 118 to 120 (YAN).

It belongs to the RbsD / FucU family. RbsD subfamily. In terms of assembly, homodecamer.

The protein resides in the cytoplasm. The enzyme catalyses beta-D-ribopyranose = beta-D-ribofuranose. It participates in carbohydrate metabolism; D-ribose degradation; D-ribose 5-phosphate from beta-D-ribopyranose: step 1/2. Catalyzes the interconversion of beta-pyran and beta-furan forms of D-ribose. The chain is D-ribose pyranase from Halalkalibacterium halodurans (strain ATCC BAA-125 / DSM 18197 / FERM 7344 / JCM 9153 / C-125) (Bacillus halodurans).